We begin with the raw amino-acid sequence, 503 residues long: ATP synthase subunit alpha (503 aa).

169–176 provides a ligand contact to ATP; that stretch reads GDRKTGKT.

The protein belongs to the ATPase alpha/beta chains family. F-type ATPases have 2 components, CF(1) - the catalytic core - and CF(0) - the membrane proton channel. CF(1) has five subunits: alpha(3), beta(3), gamma(1), delta(1), epsilon(1). CF(0) has three main subunits: a(1), b(2) and c(9-12). The alpha and beta chains form an alternating ring which encloses part of the gamma chain. CF(1) is attached to CF(0) by a central stalk formed by the gamma and epsilon chains, while a peripheral stalk is formed by the delta and b chains.

It localises to the cell membrane. It catalyses the reaction ATP + H2O + 4 H(+)(in) = ADP + phosphate + 5 H(+)(out). Its function is as follows. Produces ATP from ADP in the presence of a proton gradient across the membrane. The alpha chain is a regulatory subunit. This chain is ATP synthase subunit alpha, found in Lactobacillus delbrueckii subsp. bulgaricus (strain ATCC 11842 / DSM 20081 / BCRC 10696 / JCM 1002 / NBRC 13953 / NCIMB 11778 / NCTC 12712 / WDCM 00102 / Lb 14).